The sequence spans 262 residues: MTILNEIIEYKKTLLERKYYDKKLEILQDNGNVKRRKLIDSLNYDRTLSVIAEIKSKSPSVPQLPQRDLVQQVKDYQKYGANAISILTDEKYFGGSFERLNQLSKITSLPVLCKDFIIDKIQIDVAKRAGASIILLIVNILSDDQLKELYSYAINHNLEVLVEVHTIRELERAHQINPKIIGVNNRDLKRFETDVLHTNKLLKFKKSNCCYISESGIHTKEDVEKIVDSNIDGLLVGEALMKTNDLSQFLPSLKLKKNLYDS.

It belongs to the TrpC family.

The catalysed reaction is 1-(2-carboxyphenylamino)-1-deoxy-D-ribulose 5-phosphate + H(+) = (1S,2R)-1-C-(indol-3-yl)glycerol 3-phosphate + CO2 + H2O. It participates in amino-acid biosynthesis; L-tryptophan biosynthesis; L-tryptophan from chorismate: step 4/5. This Staphylococcus epidermidis (strain ATCC 12228 / FDA PCI 1200) protein is Indole-3-glycerol phosphate synthase.